We begin with the raw amino-acid sequence, 827 residues long: Multiple RNA-binding domain-containing protein 1 (827 aa).

The RRM 1 domain maps to 5–78; it reads SRIFVKNLPP…SRISVDIAKP (74 aa). Disordered stretches follow at residues 77 to 116, 176 to 230, and 256 to 299; these read KPIADSKPQHKSPSKGSSKDADPKNAPKVLPPNTKVTAAA, AGLE…ATDD, and AASG…DPES. Over residues 179-189 the composition is skewed to acidic residues; it reads EDGESDDEYED. Low complexity-rich tracts occupy residues 208–225 and 256–270; these read APLAASAEPSESAPPVSL and AASGSAAVSVPSTSV. Positions 277-288 are enriched in basic and acidic residues; the sequence is KPEEHPAEDSRE. RRM domains are found at residues 308–384, 489–560, 599–682, and 704–781; these read SRLF…PAAA, TTIL…KGPK, SSLF…ASHR, and TKLV…FAQA.

The protein belongs to the RRM MRD1 family.

The protein localises to the nucleus. Its function is as follows. Involved in pre-rRNA processing. This Neurospora crassa (strain ATCC 24698 / 74-OR23-1A / CBS 708.71 / DSM 1257 / FGSC 987) protein is Multiple RNA-binding domain-containing protein 1 (mrd-1).